Here is a 206-residue protein sequence, read N- to C-terminus: Ribonuclease HII (206 aa).

The 193-residue stretch at 14–206 (ALVCGIDEAG…FRLRQLGEKP (193 aa)) folds into the RNase H type-2 domain. Residues Asp20, Glu21, and Asp117 each coordinate a divalent metal cation.

It belongs to the RNase HII family. Requires Mn(2+) as cofactor. The cofactor is Mg(2+).

It localises to the cytoplasm. The enzyme catalyses Endonucleolytic cleavage to 5'-phosphomonoester.. Functionally, endonuclease that specifically degrades the RNA of RNA-DNA hybrids. This Pelodictyon phaeoclathratiforme (strain DSM 5477 / BU-1) protein is Ribonuclease HII.